Consider the following 2430-residue polypeptide: DNA-directed RNA polymerase subunit beta'' (2430 aa).

The Zn(2+) site is built by Cys336, Cys455, Cys462, and Cys465.

Belongs to the RNA polymerase beta' chain family. RpoC2 subfamily. As to quaternary structure, in plastids the minimal PEP RNA polymerase catalytic core is composed of four subunits: alpha, beta, beta', and beta''. When a (nuclear-encoded) sigma factor is associated with the core the holoenzyme is formed, which can initiate transcription. It depends on Zn(2+) as a cofactor.

It is found in the plastid. Its subcellular location is the chloroplast. It catalyses the reaction RNA(n) + a ribonucleoside 5'-triphosphate = RNA(n+1) + diphosphate. DNA-dependent RNA polymerase catalyzes the transcription of DNA into RNA using the four ribonucleoside triphosphates as substrates. In Stigeoclonium helveticum (Green alga), this protein is DNA-directed RNA polymerase subunit beta''.